The sequence spans 251 residues: MVDIQDFSTNLIENNQAIMIVGPKYTGKTTLIERLVNDLCARKEIKRIYWYKPMNSRSINYSEKNKFSSLVKLYNNYQNIFDEYSKKSIQKKLNKESNKESIIVLDDIRPHNIPTINIIKKLILDRKKNNVTIIFSLQNFGPYNGVVLPFDLYFSFDNFNYMSKKMFSCEFKKKFKTTYEYEFKMFTNKYSKTKYNSLVFDGHTLNLYQFNAVSAITEYPNKDTYFDLLDEFDIEIIEDTIKIPNKLVIEI.

This is an uncharacterized protein from Acanthamoeba polyphaga mimivirus (APMV).